A 153-amino-acid polypeptide reads, in one-letter code: UPF0756 membrane protein LSL_0936 (153 aa).

The next 5 membrane-spanning stretches (helical) occupy residues 4–24, 26–46, 51–71, 86–106, and 116–136; these read WIFL…SLLI, GAVV…YPVI, INWG…TGQI, WIAV…VNLL, and LVIG…GPVI.

It belongs to the UPF0756 family.

The protein resides in the cell membrane. This chain is UPF0756 membrane protein LSL_0936, found in Ligilactobacillus salivarius (strain UCC118) (Lactobacillus salivarius).